Consider the following 39-residue polypeptide: Large ribosomal subunit protein bL36 (39 aa).

Belongs to the bacterial ribosomal protein bL36 family.

In Lactiplantibacillus plantarum (strain ATCC BAA-793 / NCIMB 8826 / WCFS1) (Lactobacillus plantarum), this protein is Large ribosomal subunit protein bL36.